The chain runs to 478 residues: Aspartyl/glutamyl-tRNA(Asn/Gln) amidotransferase subunit B (478 aa).

It belongs to the GatB/GatE family. GatB subfamily. As to quaternary structure, heterotrimer of A, B and C subunits.

It carries out the reaction L-glutamyl-tRNA(Gln) + L-glutamine + ATP + H2O = L-glutaminyl-tRNA(Gln) + L-glutamate + ADP + phosphate + H(+). It catalyses the reaction L-aspartyl-tRNA(Asn) + L-glutamine + ATP + H2O = L-asparaginyl-tRNA(Asn) + L-glutamate + ADP + phosphate + 2 H(+). Its function is as follows. Allows the formation of correctly charged Asn-tRNA(Asn) or Gln-tRNA(Gln) through the transamidation of misacylated Asp-tRNA(Asn) or Glu-tRNA(Gln) in organisms which lack either or both of asparaginyl-tRNA or glutaminyl-tRNA synthetases. The reaction takes place in the presence of glutamine and ATP through an activated phospho-Asp-tRNA(Asn) or phospho-Glu-tRNA(Gln). The polypeptide is Aspartyl/glutamyl-tRNA(Asn/Gln) amidotransferase subunit B (Pseudothermotoga lettingae (strain ATCC BAA-301 / DSM 14385 / NBRC 107922 / TMO) (Thermotoga lettingae)).